A 323-amino-acid chain; its full sequence is Aldo-keto reductase family 1 member C3 (323 aa).

NADP(+) contacts are provided by residues threonine 23–tyrosine 24 and aspartate 50. Tyrosine 55 (proton donor) is an active-site residue. Histidine 117 lines the substrate pocket. NADP(+) contacts are provided by residues serine 166–asparagine 167, glutamine 190, tyrosine 216–glutamine 222, lysine 270–tyrosine 272, and arginine 276–asparagine 280.

This sequence belongs to the aldo/keto reductase family. As to expression, expressed in many tissues including adrenal gland, brain, kidney, liver, lung, mammary gland, placenta, small intestine, colon, spleen, prostate and testis. High expression in prostate and mammary gland. In the prostate, higher levels in epithelial cells than in stromal cells. In the brain, expressed in medulla, spinal cord, frontotemporal lobes, thalamus, subthalamic nuclei and amygdala. Weaker expression in the hippocampus, substantia nigra and caudate.

The protein resides in the cytoplasm. It catalyses the reaction a 3alpha-hydroxysteroid + NADP(+) = a 3-oxosteroid + NADPH + H(+). The enzyme catalyses a 3alpha-hydroxysteroid + NAD(+) = a 3-oxosteroid + NADH + H(+). The catalysed reaction is prostaglandin F2alpha + NADP(+) = prostaglandin D2 + NADPH + H(+). It carries out the reaction prostaglandin F2alpha + NADP(+) = prostaglandin H2 + NADPH + H(+). It catalyses the reaction prostaglandin D2 + NADPH + H(+) = 11beta-prostaglandin F2 + NADP(+). The enzyme catalyses prostaglandin D2-ethanolamide + NADPH + H(+) = 11beta-prostaglandin F2-ethanolamide + NADP(+). The catalysed reaction is testosterone + NAD(+) = androst-4-ene-3,17-dione + NADH + H(+). It carries out the reaction testosterone + NADP(+) = androst-4-ene-3,17-dione + NADPH + H(+). It catalyses the reaction 17beta-estradiol + NADP(+) = estrone + NADPH + H(+). The enzyme catalyses 17beta-estradiol + NAD(+) = estrone + NADH + H(+). The catalysed reaction is (20S)-hydroxypregn-4-en-3-one + NADP(+) = progesterone + NADPH + H(+). It carries out the reaction (20S)-hydroxypregn-4-en-3-one + NAD(+) = progesterone + NADH + H(+). It catalyses the reaction 5alpha-androstane-3alpha,17beta-diol + NADP(+) = 17beta-hydroxy-5alpha-androstan-3-one + NADPH + H(+). The enzyme catalyses 5alpha-androstane-3alpha,17beta-diol + NAD(+) = 17beta-hydroxy-5alpha-androstan-3-one + NADH + H(+). The catalysed reaction is androsterone + NADPH + H(+) = 5alpha-androstane-3alpha,17beta-diol + NADP(+). It carries out the reaction 5alpha-androstane-3alpha,17beta-diol + NAD(+) = androsterone + NADH + H(+). It catalyses the reaction 5alpha-androstane-3beta,17beta-diol + NADP(+) = 17beta-hydroxy-5alpha-androstan-3-one + NADPH + H(+). The enzyme catalyses 9-cis-retinol + NADP(+) = 9-cis-retinal + NADPH + H(+). Its pathway is steroid metabolism. Strongly inhibited by nonsteroidal anti-inflammatory drugs (NSAID) including flufenamic acid and indomethacin. Also inhibited by the flavinoid, rutin, and by selective serotonin inhibitors (SSRIs). The oxidation reaction is inhibited by low micromolar concentrations of NADPH. Functionally, cytosolic aldo-keto reductase that catalyzes the NADH and NADPH-dependent reduction of ketosteroids to hydroxysteroids. Acts as a NAD(P)(H)-dependent 3-, 17- and 20-ketosteroid reductase on the steroid nucleus and side chain and regulates the metabolism of androgens, estrogens and progesterone. Displays the ability to catalyze both oxidation and reduction in vitro, but most probably acts as a reductase in vivo since the oxidase activity measured in vitro is inhibited by physiological concentration of NADPH. Acts preferentially as a 17-ketosteroid reductase and has the highest catalytic efficiency of the AKR1C enzyme for the reduction of delta4-androstenedione to form testosterone. Reduces prostaglandin (PG) D2 to 11beta-prostaglandin F2, progesterone to 20alpha-hydroxyprogesterone and estrone to 17beta-estradiol. Catalyzes the transformation of the potent androgen dihydrotestosterone (DHT) into the less active form, 5-alpha-androstan-3-alpha,17-beta-diol (3-alpha-diol). Also displays retinaldehyde reductase activity toward 9-cis-retinal. In Homo sapiens (Human), this protein is Aldo-keto reductase family 1 member C3 (AKR1C3).